Here is a 219-residue protein sequence, read N- to C-terminus: dTTP/UTP pyrophosphatase (219 aa).

Aspartate 79 acts as the Proton acceptor in catalysis.

It belongs to the Maf family. YhdE subfamily. Requires a divalent metal cation as cofactor.

The protein localises to the cytoplasm. It catalyses the reaction dTTP + H2O = dTMP + diphosphate + H(+). The catalysed reaction is UTP + H2O = UMP + diphosphate + H(+). Functionally, nucleoside triphosphate pyrophosphatase that hydrolyzes dTTP and UTP. May have a dual role in cell division arrest and in preventing the incorporation of modified nucleotides into cellular nucleic acids. The polypeptide is dTTP/UTP pyrophosphatase (Oleidesulfovibrio alaskensis (strain ATCC BAA-1058 / DSM 17464 / G20) (Desulfovibrio alaskensis)).